A 52-amino-acid chain; its full sequence is Conotoxin Cal9.2b (52 aa).

Residues Lys-1–Leu-6 constitute a propeptide that is removed on maturation. Cystine bridges form between Cys-14-Cys-31, Cys-19-Cys-41, and Cys-21-Cys-46.

As to expression, expressed by the venom duct.

Its subcellular location is the secreted. Functionally, probable neurotoxin with unknown target. Possibly targets ion channels. In Californiconus californicus (California cone), this protein is Conotoxin Cal9.2b.